Consider the following 299-residue polypeptide: Syntenin-1 (299 aa).

Ser-2 bears the N-acetylserine mark. Residues 2 to 103 are interaction with PDCD6IP; sequence SLYPSLEDLK…VAPVTGNDAG (102 aa). 3 consecutive short sequence motifs (LYPX(n)L motif) follow at residues 3–7, 46–50, and 50–54; these read LYPSL, LYPKL, and LYPEL. Ser-6 bears the Phosphoserine mark. Tyr-47 is subject to Phosphotyrosine. 2 PDZ domains span residues 115 to 194 and 199 to 273; these read EVIL…IRDR and TVTM…IMPT. 251 to 252 provides a ligand contact to a 1,2-diacyl-sn-glycero-3-phospho-(1D-myo-inositol-4,5-bisphosphate); the sequence is KD.

As to quaternary structure, monomer and homodimer. Interacts with SDC1, SDC2, SDC3, SDC4, NRXN2, EPHA7, EPHB1, NF2 isoform 1, TGFA, IL5RA, NFASC, SDCBP2 and PTPRJ. Interacts with PDCD6IP. Forms a complex with PDCD6IP and SDC2. Interacts (via C-terminus) with TGFBR1. Binds to FZD7; this interaction is increased by inositol trisphosphate (IP3). Interacts with SMO. In terms of processing, phosphorylated on tyrosine residues.

Its subcellular location is the cell junction. It is found in the focal adhesion. The protein resides in the adherens junction. The protein localises to the cell membrane. It localises to the endoplasmic reticulum membrane. Its subcellular location is the nucleus. It is found in the melanosome. The protein resides in the cytoplasm. The protein localises to the cytosol. It localises to the cytoskeleton. Its subcellular location is the secreted. It is found in the extracellular exosome. The protein resides in the membrane raft. In terms of biological role, multifunctional adapter protein involved in diverse array of functions including trafficking of transmembrane proteins, neuro and immunomodulation, exosome biogenesis, and tumorigenesis. Positively regulates TGFB1-mediated SMAD2/3 activation and TGFB1-induced epithelial-to-mesenchymal transition (EMT) and cell migration in various cell types. May increase TGFB1 signaling by enhancing cell-surface expression of TGFR1 by preventing the interaction between TGFR1 and CAV1 and subsequent CAV1-dependent internalization and degradation of TGFR1. In concert with SDC1/4 and PDCD6IP, regulates exosome biogenesis. Regulates migration, growth, proliferation, and cell cycle progression in a variety of cancer types. In adherens junctions may function to couple syndecans to cytoskeletal proteins or signaling components. Seems to couple transcription factor SOX4 to the IL-5 receptor (IL5RA). May also play a role in vesicular trafficking. Seems to be required for the targeting of TGFA to the cell surface in the early secretory pathway. This is Syntenin-1 (Sdcbp) from Mus musculus (Mouse).